A 122-amino-acid chain; its full sequence is Large ribosomal subunit protein bL12 (122 aa).

The protein belongs to the bacterial ribosomal protein bL12 family. In terms of assembly, homodimer. Part of the ribosomal stalk of the 50S ribosomal subunit. Forms a multimeric L10(L12)X complex, where L10 forms an elongated spine to which 2 to 4 L12 dimers bind in a sequential fashion. Binds GTP-bound translation factors.

Forms part of the ribosomal stalk which helps the ribosome interact with GTP-bound translation factors. Is thus essential for accurate translation. The sequence is that of Large ribosomal subunit protein bL12 from Histophilus somni (strain 129Pt) (Haemophilus somnus).